The sequence spans 247 residues: UDP-N-acetyl-D-mannosaminuronic acid transferase (247 aa).

It belongs to the glycosyltransferase 26 family.

The enzyme catalyses UDP-N-acetyl-alpha-D-mannosaminouronate + N-acetyl-alpha-D-glucosaminyl-di-trans,octa-cis-undecaprenyl diphosphate = beta-D-ManNAcA-(1-&gt;4)-alpha-D-GlcNAc-di-trans,octa-cis-undecaprenyl diphosphate + UDP + H(+). It functions in the pathway bacterial outer membrane biogenesis; enterobacterial common antigen biosynthesis. Functionally, catalyzes the synthesis of Und-PP-GlcNAc-ManNAcA (Lipid II), the second lipid-linked intermediate involved in enterobacterial common antigen (ECA) synthesis. This Enterobacter sp. (strain 638) protein is UDP-N-acetyl-D-mannosaminuronic acid transferase.